Here is a 294-residue protein sequence, read N- to C-terminus: S-adenosylmethionine uptake transporter (294 aa).

10 helical membrane-spanning segments follow: residues 4–24, 39–59, 74–91, 98–118, 121–141, 148–168, 177–197, 207–227, 237–257, and 260–280; these read ALKT…SSSA, FEVA…FVFY, ILRG…TYGL, TATV…VFFL, NIIW…VVTL, FNPE…LDII, SMIS…LPVA, FELA…FFLL, ATAP…YFIF, and FPDK…LFII. 2 EamA domains span residues 21–141 and 160–280; these read SSSA…VVTL and ISFA…LFII.

The protein belongs to the drug/metabolite transporter (DMT) superfamily. 10 TMS drug/metabolite exporter (DME) (TC 2.A.7.3) family.

It localises to the cell inner membrane. Functionally, transports S-adenosylmethionine. This Rickettsia felis (strain ATCC VR-1525 / URRWXCal2) (Rickettsia azadi) protein is S-adenosylmethionine uptake transporter (sam).